The following is a 269-amino-acid chain: Protein TIFY 11B (269 aa).

Residues 100–135 enclose the Tify domain; it reads PESGNSQLTIFFGGKVMVFNEFPEDKAKEIMEVAKE. Positions 160–181 are disordered; the sequence is PDLNEPTSSGNNEDQETGQQHQ. Residues 164 to 181 are compositionally biased toward polar residues; the sequence is EPTSSGNNEDQETGQQHQ. A Jas motif is present at residues 186–210; it reads IARRASLHRFFAKRKDRAVARAPYQ. The Nuclear localization signal motif lies at 187-194; it reads ARRASLHR. The tract at residues 209–269 is disordered; that stretch reads YQVNQHGSHL…QSSKNLELKL (61 aa). A compositionally biased stretch (basic and acidic residues) spans 250–269; it reads MPMEVDKKEGQSSKNLELKL.

It belongs to the TIFY/JAZ family. As to quaternary structure, homo- and heterodimer. Interacts with MYC2, AFPH2/NINJA, TIFY10A/JAZ1, TIFY10B/JAZ2, TIFY11A/JAZ5, TIFY5A/JAZ8, TIFY9/JAZ10 and TIFY3B/JAZ12. (Microbial infection) Interacts with the pathogenic Pseudomonas syringae HopZ1a protein. (Microbial infection) Acetylated by Pseudomonas syringae HopZ1a. In terms of processing, ubiquitinated. Targeted for degradation by the SCF(COI1) E3 ubiquitin ligase-proteasome pathway during jasmonate signaling.

The protein resides in the nucleus. Its subcellular location is the cell membrane. Repressor of jasmonate responses. The protein is Protein TIFY 11B of Arabidopsis thaliana (Mouse-ear cress).